The chain runs to 435 residues: MTKCSFFRAILVAVGLMTAAVFATPANALVTLDIRKGNVQPMPIAVTDFQGDIGAQVSQVIAADLQRSGLFAPINKTAFIEKISNPDAAPRFEDWKVINAQALVTGRVSKEADGRLRAEFRLWDPFAGQQMTGQQFYTQPENWRRVAHIIADAIYKQITGEEGYFDTRVVFVSESGTKQQRKRQLAIMDQDGFNVRMLTDGSDLVLTPRFSPSRQEVTYMSFANQQPRVYLLQLETGQREVVGNFPGMTFSPRFSPDGQKVIMSLQQDANSNIYTMDLRSRTTTRLTSTAAIDTSPSYSPDGARVSFESDRGGKPQIYVMNADGSGQTRISFGDGSYSTPVWSPRGDLIAFTKQAGGKFSIGVMKPDGSGERILTTGFHNEGPTWAPNGRVLMFFRQAAGSGGPQLYSIDLTGYNEQLVKTPTYGSDPAWSPLME.

The signal sequence occupies residues 1–28 (MTKCSFFRAILVAVGLMTAAVFATPANA). Residues 288–310 (STAAIDTSPSYSPDGARVSFESD) form a disordered region.

The protein belongs to the TolB family. The Tol-Pal system is composed of five core proteins: the inner membrane proteins TolA, TolQ and TolR, the periplasmic protein TolB and the outer membrane protein Pal. They form a network linking the inner and outer membranes and the peptidoglycan layer.

The protein resides in the periplasm. Its function is as follows. Part of the Tol-Pal system, which plays a role in outer membrane invagination during cell division and is important for maintaining outer membrane integrity. This is Tol-Pal system protein TolB from Rhizobium johnstonii (strain DSM 114642 / LMG 32736 / 3841) (Rhizobium leguminosarum bv. viciae).